Consider the following 162-residue polypeptide: Transcription elongation factor GreA (162 aa).

Positions 45-74 (ENAEYEAAREKQAFIEGRIKELEDMTARAE) form a coiled coil.

This sequence belongs to the GreA/GreB family.

Its function is as follows. Necessary for efficient RNA polymerase transcription elongation past template-encoded arresting sites. The arresting sites in DNA have the property of trapping a certain fraction of elongating RNA polymerases that pass through, resulting in locked ternary complexes. Cleavage of the nascent transcript by cleavage factors such as GreA or GreB allows the resumption of elongation from the new 3'terminus. GreA releases sequences of 2 to 3 nucleotides. This is Transcription elongation factor GreA from Rickettsia conorii (strain ATCC VR-613 / Malish 7).